We begin with the raw amino-acid sequence, 976 residues long: Dolichyl-phosphooligosaccharide-protein glycotransferase 1 (976 aa).

Residues 1–21 (MVKSKVKKVEKGKEGEEKRST) are Cytoplasmic-facing. A helical transmembrane segment spans residues 22–42 (YVLLKKVLIPILVFGFAIYAF). The Extracellular portion of the chain corresponds to 43 to 112 (YLRHLTAGKY…KVVSLFGYNE (70 aa)). The short motif at 55–57 (DPD) is the DXD motif 1 element. Mn(2+) is bound at residue aspartate 57. Residues 113–133 (LQAFLLWPPFVGFLGVIAVYL) form a helical membrane-spanning segment. The Cytoplasmic portion of the chain corresponds to 134–135 (LG). The helical transmembrane segment at 136–156 (RKVLNEWTGLWGAVVLTVSTA) threads the bilayer. Topologically, residues 157 to 165 (NFSRTFSGN) are extracellular. Residues 166–186 (ARGDGPFMALFIFASVAMLYY) form a helical membrane-spanning segment. Mn(2+) is bound by residues arginine 167 and aspartate 169. The DXD motif 2 signature appears at 167–169 (RGD). Residues 187–193 (LKESNKT) are Cytoplasmic-facing. A helical membrane pass occupies residues 194–214 (RKIIYGTLFVLLTVISLGAWN). Residue glycine 215 is a topological domain, extracellular. Residues 216–236 (SPFGLMVLLGFASLQTIILFI) traverse the membrane as a helical segment. Topologically, residues 237–247 (FGKLEELKKFV) are cytoplasmic. A helical membrane pass occupies residues 248-268 (KEFYPAYLAILAFGYALTFPG). Isoleucine 269 is a topological domain (extracellular). The helical transmembrane segment at 270 to 290 (VKIGGFIRFAFEVFLGLIFLL) threads the bilayer. Residues 291-306 (VIMLYGGRYLNYSDKK) are Cytoplasmic-facing. Residues 307 to 327 (HRFLVVTIIVLLGFGGAYAYV) form a helical membrane-spanning segment. Residues 328 to 360 (GPKLFRLMGGAYQSTQVYETVQELAKTTIGDVK) are Extracellular-facing. Positions 347 to 350 (TVQE) match the TIXE motif motif. The chain crosses the membrane as a helical span at residues 361 to 381 (AYYGVESGNGLIFFLSIPGLL). The Cytoplasmic portion of the chain corresponds to 382–396 (ILLTKYLYDLFKKAK). Residues 397–417 (SDNETLFALVFYTMSLYLLYL) traverse the membrane as a helical segment. A topological domain (extracellular) is located at residue alanine 418. A helical membrane pass occupies residues 419-439 (VRFLFLASYAVALFFGIFIGF). Arginine 420 is an a glycophospholipid binding site. Topologically, residues 440 to 453 (SMDVIEKMKENIGI) are cytoplasmic. The helical transmembrane segment at 454–474 (KAALGIVLSLMILVIPFVHAP) threads the bilayer. At 475-976 (VLARSARALK…SASAPHHSSE (502 aa)) the chain is on the extracellular side. The segment at 513–515 (WWD) is interacts with target acceptor peptide in protein substrate. The WWDYG motif motif lies at 513–517 (WWDYG). An a glycophospholipid-binding site is contributed by tyrosine 518. The DK motif motif lies at 573–580 (DWAKFNAI).

The protein belongs to the STT3 family. Mn(2+) serves as cofactor. Mg(2+) is required as a cofactor.

It localises to the cell membrane. It catalyses the reaction an archaeal dolichyl phosphooligosaccharide + [protein]-L-asparagine = an archaeal dolichyl phosphate + a glycoprotein with the oligosaccharide chain attached by N-beta-D-glycosyl linkage to a protein L-asparagine.. It functions in the pathway protein modification; protein glycosylation. Functionally, oligosaccharyl transferase (OST) that catalyzes the initial transfer of a defined glycan (ManNAcXyl(2)GlcAMan(2)GalNAc in Pyrococcus) from the lipid carrier dolichol-monophosphate to an asparagine residue within an Asn-X-Ser/Thr consensus motif in nascent polypeptide chains, the first step in protein N-glycosylation. This is Dolichyl-phosphooligosaccharide-protein glycotransferase 1 (aglB1) from Pyrococcus horikoshii (strain ATCC 700860 / DSM 12428 / JCM 9974 / NBRC 100139 / OT-3).